The following is a 285-amino-acid chain: ATP phosphoribosyltransferase (285 aa).

The protein belongs to the ATP phosphoribosyltransferase family. Long subfamily. Mg(2+) is required as a cofactor.

It localises to the cytoplasm. It carries out the reaction 1-(5-phospho-beta-D-ribosyl)-ATP + diphosphate = 5-phospho-alpha-D-ribose 1-diphosphate + ATP. It functions in the pathway amino-acid biosynthesis; L-histidine biosynthesis; L-histidine from 5-phospho-alpha-D-ribose 1-diphosphate: step 1/9. Its activity is regulated as follows. Feedback inhibited by histidine. Functionally, catalyzes the condensation of ATP and 5-phosphoribose 1-diphosphate to form N'-(5'-phosphoribosyl)-ATP (PR-ATP). Has a crucial role in the pathway because the rate of histidine biosynthesis seems to be controlled primarily by regulation of HisG enzymatic activity. The sequence is that of ATP phosphoribosyltransferase from Methanocella arvoryzae (strain DSM 22066 / NBRC 105507 / MRE50).